A 108-amino-acid chain; its full sequence is Universal stress protein Slr1101 (108 aa).

Belongs to the universal stress protein A family.

The polypeptide is Universal stress protein Slr1101 (Synechocystis sp. (strain ATCC 27184 / PCC 6803 / Kazusa)).